The following is a 442-amino-acid chain: NAD kinase 2, mitochondrial (442 aa).

Residues 1 to 62 (MTCYRGFLLG…RELAGCGSRA (62 aa)) constitute a mitochondrion transit peptide. Positions 24–36 (RGPGAGGPAARPR) are enriched in low complexity. The tract at residues 24 to 60 (RGPGAGGPAARPRLGGDGGGRRHLGQGQPRELAGCGS) is disordered. Position 76 is an N6-acetyllysine; alternate (K76). The residue at position 76 (K76) is an N6-succinyllysine; alternate. S188 is modified (phosphoserine). K302 bears the N6-succinyllysine mark. K317 carries the post-translational modification N6-acetyllysine; alternate. N6-succinyllysine; alternate is present on K317. The residue at position 367 (S367) is a Phosphoserine. K397 is modified (N6-acetyllysine).

Belongs to the NAD kinase family. Homodimer. As to expression, widely expressed.

The protein localises to the mitochondrion. The catalysed reaction is NAD(+) + ATP = ADP + NADP(+) + H(+). With respect to regulation, inhibited by NADH, NADPH and NADP(+). Mitochondrial NAD(+) kinase that phosphorylates NAD(+) to yield NADP(+). Can use both ATP or inorganic polyphosphate as the phosphoryl donor. Also has weak NADH kinase activity in vitro; however NADH kinase activity is much weaker than the NAD(+) kinase activity and may not be relevant in vivo. The chain is NAD kinase 2, mitochondrial (NADK2) from Homo sapiens (Human).